A 257-amino-acid chain; its full sequence is MTVVVSDHQNPRPPGDDAAPLGRTGNRDRPPGSFFGRRKGHRLRPHQNDLVAQLLPRLGFDPARIGPSGPAALFDPPVDETRIEIGFGGGEHLVAEALAFPRAGFIGCEPYVNGMAKILVQIEAHAIRNIRLFAGDASQLLACLPPASLARIDLIHPDPWPKRRHWKRRFVQDATVAEMARVLRPEGEFRFVSDIDDYCAWTLTHLARSPDFLWLAERSADWQDPWSGYTMTRYGRKAMREGRRAAYLRFRRERTAV.

The segment at 1–42 is disordered; the sequence is MTVVVSDHQNPRPPGDDAAPLGRTGNRDRPPGSFFGRRKGHR. Glu-84, Glu-109, Asp-136, and Asp-158 together coordinate S-adenosyl-L-methionine. Residue Asp-158 is part of the active site. Residues Lys-162 and Asp-194 each coordinate substrate.

This sequence belongs to the class I-like SAM-binding methyltransferase superfamily. TrmB family.

It carries out the reaction guanosine(46) in tRNA + S-adenosyl-L-methionine = N(7)-methylguanosine(46) in tRNA + S-adenosyl-L-homocysteine. The protein operates within tRNA modification; N(7)-methylguanine-tRNA biosynthesis. Catalyzes the formation of N(7)-methylguanine at position 46 (m7G46) in tRNA. The chain is tRNA (guanine-N(7)-)-methyltransferase from Nitrobacter winogradskyi (strain ATCC 25391 / DSM 10237 / CIP 104748 / NCIMB 11846 / Nb-255).